Reading from the N-terminus, the 152-residue chain is Putative superoxide dismutase [Cu-Zn] (152 aa).

The Cu cation site is built by His43, His45, and His60. Cys54 and Cys144 are disulfide-bonded. Zn(2+) contacts are provided by His60, His68, His77, and Asp80. His118 is a binding site for Cu cation.

This sequence belongs to the Cu-Zn superoxide dismutase family. The cofactor is Cu cation. Zn(2+) serves as cofactor.

The enzyme catalyses 2 superoxide + 2 H(+) = H2O2 + O2. Functionally, destroys radicals which are normally produced within the cells and which are toxic to biological systems. In Orgyia pseudotsugata (Douglas-fir tussock moth), this protein is Putative superoxide dismutase [Cu-Zn] (SOD).